The chain runs to 294 residues: Thymidylate synthase (294 aa).

Residues arginine 31 and arginine 156–arginine 157 each bind dUMP. Cysteine 176 acts as the Nucleophile in catalysis. DUMP contacts are provided by residues arginine 196–aspartate 199, asparagine 207, and histidine 237–tyrosine 239. Residue aspartate 199 coordinates (6R)-5,10-methylene-5,6,7,8-tetrahydrofolate. Alanine 293 contributes to the (6R)-5,10-methylene-5,6,7,8-tetrahydrofolate binding site.

It belongs to the thymidylate synthase family. As to quaternary structure, homodimer.

The enzyme catalyses dUMP + (6R)-5,10-methylene-5,6,7,8-tetrahydrofolate = 7,8-dihydrofolate + dTMP. It participates in pyrimidine metabolism; dTTP biosynthesis. This chain is Thymidylate synthase (70), found in Saimiri sciureus (Common squirrel monkey).